A 640-amino-acid chain; its full sequence is Chaperone protein HtpG (640 aa).

Residues 1-343 are a; substrate-binding; that stretch reads MQTAENVEHL…SNDLPLNVSR (343 aa). The b stretch occupies residues 344–564; that stretch reads EILQESKDID…THDMSGNLGR (221 aa). The segment at 565–640 is c; the sequence is LLKSAGQKVP…LLLQNILSGK (76 aa).

Belongs to the heat shock protein 90 family. Homodimer.

It is found in the cytoplasm. Functionally, molecular chaperone. Has ATPase activity. This chain is Chaperone protein HtpG, found in Nitrosomonas eutropha (strain DSM 101675 / C91 / Nm57).